Consider the following 152-residue polypeptide: Methylglyoxal synthase (152 aa).

Residues 6 to 152 (RTLATEKNIA…YEGYLKERLK (147 aa)) enclose the MGS-like domain. Residues His-19, Lys-23, 45-48 (TGTT), and 65-66 (SG) contribute to the substrate site. The active-site Proton donor/acceptor is the Asp-71. Residue His-98 participates in substrate binding.

Belongs to the methylglyoxal synthase family.

It carries out the reaction dihydroxyacetone phosphate = methylglyoxal + phosphate. In terms of biological role, catalyzes the formation of methylglyoxal from dihydroxyacetone phosphate. The chain is Methylglyoxal synthase from Proteus mirabilis (strain HI4320).